The following is a 172-amino-acid chain: Hemagglutinin/amebocyte aggregation factor (172 aa).

The first 19 residues, 1–19, serve as a signal peptide directing secretion; sequence MNSPAIVIIIFSTLTFSEA. A run of 4 repeats spans residues 21–25, 50–54, 73–77, and 102–106. Cystine bridges form between C32–C58, C67–C172, C84–C110, C111–C117, and C123–C167. 2 repeat units span residues 129-133 and 158-162.

Belongs to the dermatopontin family.

It is found in the secreted. In terms of biological role, possesses the property of inducing both aggregation of amebocytes and agglutination of erythrocytes. This Limulus polyphemus (Atlantic horseshoe crab) protein is Hemagglutinin/amebocyte aggregation factor.